Consider the following 196-residue polypeptide: Large ribosomal subunit protein uL5 (196 aa).

Belongs to the universal ribosomal protein uL5 family. As to quaternary structure, part of the 50S ribosomal subunit; part of the 5S rRNA/L5/L18/L25 subcomplex. Contacts the 5S rRNA and the P site tRNA. Forms a bridge to the 30S subunit in the 70S ribosome.

Its function is as follows. This is one of the proteins that bind and probably mediate the attachment of the 5S RNA into the large ribosomal subunit, where it forms part of the central protuberance. In the 70S ribosome it contacts protein S13 of the 30S subunit (bridge B1b), connecting the 2 subunits; this bridge is implicated in subunit movement. Contacts the P site tRNA; the 5S rRNA and some of its associated proteins might help stabilize positioning of ribosome-bound tRNAs. This is Large ribosomal subunit protein uL5 from Prosthecochloris aestuarii (strain DSM 271 / SK 413).